We begin with the raw amino-acid sequence, 457 residues long: Putative movement protein (457 aa).

Disordered regions lie at residues 265–284, 293–312, and 345–457; these read SGSR…LERS, FRSQ…SDFE, and ARQD…PPSV. Residues 411–426 show a composition bias toward gly residues; the sequence is RAGGGEIHGGSEGGGV. A compositionally biased stretch (basic and acidic residues) spans 448-457; that stretch reads YKQHDLPPSV.

Belongs to the tobamoviruses movement protein family.

Suppressor of viral-induced RNA silencing. This Crataegus (hawthorn) protein is Putative movement protein.